A 64-amino-acid polypeptide reads, in one-letter code: Neuropeptide-like 4 (64 aa).

Residues 1-18 (MFKLLVVVFAALFAAALA) form the signal peptide. Propeptides lie at residues 19-40 (VPAPVARANPAPIPIASPEPAP) and 63-64 (YG).

Its subcellular location is the secreted. In Drosophila melanogaster (Fruit fly), this protein is Neuropeptide-like 4 (Nplp4).